A 501-amino-acid chain; its full sequence is Phosphoethanolamine N-methyltransferase 1 (501 aa).

G72, R77, D93, D118, V119, and N137 together coordinate S-adenosyl-L-homocysteine. Residues S170, T175, G176, R180, and Y187 each contribute to the phosphocholine site. Residues 256–257 (QY) and Y265 each bind N-methylethanolamine phosphate. Y265 lines the phosphocholine pocket. S-adenosyl-L-homocysteine is bound by residues V274, S275, G301, D323, D349, C350, and R366. Positions 397, 411, 415, 417, and 483 each coordinate phosphocholine. Residues Y397, Y411, 415 to 417 (RGY), and K483 contribute to the N-methylethanolamine phosphate site.

This sequence belongs to the class I-like SAM-binding methyltransferase superfamily. PEAMT family.

The enzyme catalyses phosphoethanolamine + S-adenosyl-L-methionine = N-methylethanolamine phosphate + S-adenosyl-L-homocysteine + H(+). It catalyses the reaction N-methylethanolamine phosphate + S-adenosyl-L-methionine = N,N-dimethylethanolamine phosphate + S-adenosyl-L-homocysteine + H(+). The catalysed reaction is N,N-dimethylethanolamine phosphate + S-adenosyl-L-methionine = phosphocholine + S-adenosyl-L-homocysteine + H(+). The protein operates within phospholipid metabolism; phosphatidylcholine biosynthesis; phosphocholine from phosphoethanolamine: step 1/1. Functionally, involved in phosphocholine biosynthesis. Catalyzes the N-methylation of phosphoethanolamine, phosphomonomethylethanolamine and phosphodimethylethanolamine, the three methylation steps required to convert phosphoethanolamine to phosphocholine (PC). May be involved in root development. The protein is Phosphoethanolamine N-methyltransferase 1 of Zea mays (Maize).